The primary structure comprises 810 residues: Coiled-coil domain-containing protein 15 (810 aa).

Coiled coils occupy residues 65-89, 160-189, and 638-669; these read VVEEEIKEQQRRKQESLRHFQRQVR, DGENQLFQQQAQALSQTMKQARHQLASFKT, and MDIEREQVKEQNRQRERKRRIEKIKKKKEQQR.

As to quaternary structure, interacts with POC5, POC1B, CETN2 and FAM161A.

It is found in the cytoplasm. It localises to the cytoskeleton. The protein resides in the microtubule organizing center. The protein localises to the centrosome. Its subcellular location is the centriole. It is found in the centriolar satellite. In terms of biological role, plays an important role in primary cilium assembly, maintenance, and length regulation. Interacts with centriole inner scaffold proteins to promote proper centriole size and integrity and assembly of functional cilia. Required for the recruitment of both the inner scaffold protein POC1B and the distal SFI1/CETN2 complex to centrioles. The protein is Coiled-coil domain-containing protein 15 (Ccdc15) of Mus musculus (Mouse).